A 315-amino-acid chain; its full sequence is Ornithine carbamoyltransferase (315 aa).

Carbamoyl phosphate contacts are provided by residues 57 to 60 (STRT), Q84, R108, and 135 to 138 (HPCQ). L-ornithine-binding positions include N166, D230, and 234–235 (SM). Carbamoyl phosphate contacts are provided by residues 270 to 271 (CL) and R298.

The protein belongs to the aspartate/ornithine carbamoyltransferase superfamily. OTCase family.

Its subcellular location is the cytoplasm. It carries out the reaction carbamoyl phosphate + L-ornithine = L-citrulline + phosphate + H(+). It functions in the pathway amino-acid biosynthesis; L-arginine biosynthesis; L-arginine from L-ornithine and carbamoyl phosphate: step 1/3. Its function is as follows. Reversibly catalyzes the transfer of the carbamoyl group from carbamoyl phosphate (CP) to the N(epsilon) atom of ornithine (ORN) to produce L-citrulline. The sequence is that of Ornithine carbamoyltransferase from Thermococcus kodakarensis (strain ATCC BAA-918 / JCM 12380 / KOD1) (Pyrococcus kodakaraensis (strain KOD1)).